A 116-amino-acid chain; its full sequence is Methionine-R-sulfoxide reductase B1 (116 aa).

The MsrB domain occupies 1-106 (MSFCSFFGGE…FSSSLKFVPK (106 aa)). Zn(2+) contacts are provided by Cys-23, Cys-26, Cys-71, and Cys-74. Sec-95 functions as the Nucleophile in the catalytic mechanism. Residue Sec-95 is a non-standard amino acid, selenocysteine.

This sequence belongs to the MsrB Met sulfoxide reductase family. Zn(2+) serves as cofactor. In terms of processing, truncated MSRB1/SEPX1 proteins produced by failed UGA/Sec decoding are ubiquitinated by the CRL2(FEM1C) E3 ubiquitin-protein ligase complex.

The protein resides in the cytoplasm. It localises to the nucleus. It is found in the cytoskeleton. It catalyses the reaction L-methionyl-[protein] + [thioredoxin]-disulfide + H2O = L-methionyl-(R)-S-oxide-[protein] + [thioredoxin]-dithiol. The enzyme catalyses [thioredoxin]-disulfide + L-methionine + H2O = L-methionine (R)-S-oxide + [thioredoxin]-dithiol. Its function is as follows. Methionine-sulfoxide reductase that specifically reduces methionine (R)-sulfoxide back to methionine. While in many cases, methionine oxidation is the result of random oxidation following oxidative stress, methionine oxidation is also a post-translational modification that takes place on specific residue. Acts as a regulator of actin assembly by reducing methionine (R)-sulfoxide mediated by MICALs (MICAL1, MICAL2 or MICAL3) on actin, thereby promoting filament repolymerization. Plays a role in innate immunity by reducing oxidized actin, leading to actin repolymerization in macrophages. The chain is Methionine-R-sulfoxide reductase B1 (MSRB1) from Pongo abelii (Sumatran orangutan).